We begin with the raw amino-acid sequence, 84 residues long: MPLAKDLLHPTPEEEKRKHKKKRLVQSPNSYFMDVKCPGCYKITTVFSHAQTVVLCVGCSTVLCQPTGGKARLTEGCSFRRKQH.

Basic and acidic residues predominate over residues 1–16 (MPLAKDLLHPTPEEEK). Positions 1–23 (MPLAKDLLHPTPEEEKRKHKKKR) are disordered. The C4-type zinc-finger motif lies at 37–59 (CPGCYKITTVFSHAQTVVLCVGC).

Belongs to the eukaryotic ribosomal protein eS27 family. Component of the small ribosomal subunit. Part of the small subunit (SSU) processome, composed of more than 70 proteins and the RNA chaperone small nucleolar RNA (snoRNA) U3. Requires Zn(2+) as cofactor.

The protein resides in the cytoplasm. The protein localises to the nucleus. Its subcellular location is the nucleolus. Its function is as follows. Component of the small ribosomal subunit. The ribosome is a large ribonucleoprotein complex responsible for the synthesis of proteins in the cell. Required for proper rRNA processing and maturation of 18S rRNAs. Part of the small subunit (SSU) processome, first precursor of the small eukaryotic ribosomal subunit. During the assembly of the SSU processome in the nucleolus, many ribosome biogenesis factors, an RNA chaperone and ribosomal proteins associate with the nascent pre-rRNA and work in concert to generate RNA folding, modifications, rearrangements and cleavage as well as targeted degradation of pre-ribosomal RNA by the RNA exosome. The chain is Small ribosomal subunit protein eS27 (rps27) from Xenopus laevis (African clawed frog).